We begin with the raw amino-acid sequence, 347 residues long: MRIEEDLKLGFKDVLIRPKRSTLKSRSDVELERQFTFKHSGQTWSGVPIIAANMDTVGTFEMAQALAGFDILTAVHKHYTVEEWAAFINTASADVLKHVMVSTGTSDADFEKTVQILALDPALNFVCIDVANGYSEHFVQFVAKAREAWPTKTICAGNVVTGEMCEELILSGADIVKVGIGPGSVCTTRVKTGVGYPQLSAVIECADAAHGLGGMIVSDGGCTMPGDVAKAFGGGADFVMLGGMLAGHEESGGSVVEENGEKFMLFYGMSSESAMNRHVGGVAKYRAAEGKTVKLPLRGPVGNTARDILGGLRSACTYVGASRLKELTKRTTFIRVQEQENRIFNSL.

108 to 131 (ADFEKTVQILALDPALNFVCIDVA) serves as a coordination point for NADP(+). The K(+) site is built by Gly-181 and Gly-183. Cys-186 acts as the Thioimidate intermediate in catalysis. 216–239 (IVSDGGCTMPGDVAKAFGGGADFV) serves as a coordination point for NADP(+).

Belongs to the IMPDH/GMPR family. GuaC type 1 subfamily. Homotetramer.

It catalyses the reaction IMP + NH4(+) + NADP(+) = GMP + NADPH + 2 H(+). Catalyzes the irreversible NADPH-dependent deamination of GMP to IMP. It functions in the conversion of nucleobase, nucleoside and nucleotide derivatives of G to A nucleotides, and in maintaining the intracellular balance of A and G nucleotides. The polypeptide is GMP reductase (Salmonella paratyphi B (strain ATCC BAA-1250 / SPB7)).